A 517-amino-acid chain; its full sequence is Ribonuclease Y (517 aa).

The helical transmembrane segment at 2 to 22 threads the bilayer; sequence EILVYIIIGIAIFILSLLVGI. One can recognise a KH domain in the interval 207–267; sequence TTSTVALPTD…LRREIAKRTL (61 aa). The region spanning 333 to 426 is the HD domain; it reads VLEHSIEVAQ…VAASDALSAS (94 aa).

The protein belongs to the RNase Y family.

The protein resides in the cell membrane. In terms of biological role, endoribonuclease that initiates mRNA decay. The protein is Ribonuclease Y of Petrotoga mobilis (strain DSM 10674 / SJ95).